The following is a 690-amino-acid chain: NF-kappa-B-repressing factor (690 aa).

Residues 1 to 296 (MEKILHMAEG…FKHIIGEDLV (296 aa)) are active repression domain. A Nuclear localization signal motif is present at residues 25 to 45 (KPSKGQKRYLSTYDGQNPPKK). Disordered stretches follow at residues 27–49 (SKGQKRYLSTYDGQNPPKKQAGS), 65–85 (SSSKAERQEDPYGPQTKDVNG), and 133–160 (YFDSGNPAPSSTSQQANCQPAPEPPPSQ). Lys68 participates in a covalent cross-link: Glycyl lysine isopeptide (Lys-Gly) (interchain with G-Cter in SUMO2). Residues 139–150 (PAPSSTSQQANC) show a composition bias toward polar residues. Residues 296 to 388 (VVCQIGMLSY…RVFLQDHCLA (93 aa)) mediate DNA binding. A compositionally biased stretch (polar residues) spans 414–425 (PTYPSVKSSQCH). The tract at residues 414 to 436 (PTYPSVKSSQCHSGSSPKGSGKK) is disordered. Lys500 participates in a covalent cross-link: Glycyl lysine isopeptide (Lys-Gly) (interchain with G-Cter in SUMO2). The 46-residue stretch at 551–596 (EDNIGNQLLRKMGWTGGGLGKSGEGIREPISVKEQHKREGLGLDVE) folds into the G-patch domain. In terms of domain architecture, R3H spans 600–664 (KIAKRDIEQI…DRYLVVGRKR (65 aa)). Position 618 is a phosphoserine (Ser618). Residues Lys666 and Lys674 each participate in a glycyl lysine isopeptide (Lys-Gly) (interchain with G-Cter in SUMO2) cross-link.

As to quaternary structure, interacts with NF-kappa-B. Interacts with XRN2. Interacts (via G-patch domain) with DHX15; promoting the RNA helicase activity of DHX15.

It localises to the nucleus. The protein localises to the nucleolus. Its function is as follows. Enhances the ATPase activity of DHX15 by acting like a brace that tethers mobile sections of DHX15 together, stabilizing a functional conformation with high RNA affinity of DHX15. Involved in the constitutive silencing of the interferon beta promoter, independently of the virus-induced signals, and in the inhibition of the basal and cytokine-induced iNOS promoter activity. Also involved in the regulation of IL-8 transcription. May also act as a DNA-binding transcription regulator: interacts with a specific negative regulatory element (NRE) 5'-AATTCCTCTGA-3' to mediate transcriptional repression of certain NK-kappa-B responsive genes. This chain is NF-kappa-B-repressing factor (Nkrf), found in Mus musculus (Mouse).